Consider the following 507-residue polypeptide: Ribonuclease Y (507 aa).

Residues 1 to 21 (MLWYIVAGAGGLLIGYLIANY) traverse the membrane as a helical segment. In terms of domain architecture, KH spans 197–282 (TVSTVSLPSD…EMYEKAKQEV (86 aa)). In terms of domain architecture, HD spans 323–416 (VLNHSIEVAL…VAAADALSAA (94 aa)).

Belongs to the RNase Y family.

It is found in the cell membrane. In terms of biological role, endoribonuclease that initiates mRNA decay. In Thermotoga sp. (strain RQ2), this protein is Ribonuclease Y.